A 299-amino-acid chain; its full sequence is Probable 4-deoxy-4-formamido-L-arabinose-phosphoundecaprenol deformylase ArnD (299 aa).

The NodB homology domain occupies 2 to 263 (IDVGLRIDVD…EASARGIRFV (262 aa)).

It belongs to the polysaccharide deacetylase family. ArnD deformylase subfamily.

The enzyme catalyses 4-deoxy-4-formamido-alpha-L-arabinopyranosyl di-trans,octa-cis-undecaprenyl phosphate + H2O = 4-amino-4-deoxy-alpha-L-arabinopyranosyl di-trans,octa-cis-undecaprenyl phosphate + formate. Its pathway is glycolipid biosynthesis; 4-amino-4-deoxy-alpha-L-arabinose undecaprenyl phosphate biosynthesis; 4-amino-4-deoxy-alpha-L-arabinose undecaprenyl phosphate from UDP-4-deoxy-4-formamido-beta-L-arabinose and undecaprenyl phosphate: step 2/2. It functions in the pathway bacterial outer membrane biogenesis; lipopolysaccharide biosynthesis. Catalyzes the deformylation of 4-deoxy-4-formamido-L-arabinose-phosphoundecaprenol to 4-amino-4-deoxy-L-arabinose-phosphoundecaprenol. The modified arabinose is attached to lipid A and is required for resistance to polymyxin and cationic antimicrobial peptides. This Aeromonas salmonicida (strain A449) protein is Probable 4-deoxy-4-formamido-L-arabinose-phosphoundecaprenol deformylase ArnD.